The primary structure comprises 218 residues: Ribose-5-phosphate isomerase A (218 aa).

Residues 28–31 (TGST), 81–84 (DGAD), and 94–97 (KGGG) each bind substrate. The active-site Proton acceptor is the Glu103. Lys121 serves as a coordination point for substrate.

The protein belongs to the ribose 5-phosphate isomerase family. As to quaternary structure, homodimer.

The catalysed reaction is aldehydo-D-ribose 5-phosphate = D-ribulose 5-phosphate. It participates in carbohydrate degradation; pentose phosphate pathway; D-ribose 5-phosphate from D-ribulose 5-phosphate (non-oxidative stage): step 1/1. Its function is as follows. Catalyzes the reversible conversion of ribose-5-phosphate to ribulose 5-phosphate. In Vibrio atlanticus (strain LGP32) (Vibrio splendidus (strain Mel32)), this protein is Ribose-5-phosphate isomerase A.